Here is a 206-residue protein sequence, read N- to C-terminus: Protein GrpE (206 aa).

The protein belongs to the GrpE family. As to quaternary structure, homodimer.

The protein localises to the cytoplasm. In terms of biological role, participates actively in the response to hyperosmotic and heat shock by preventing the aggregation of stress-denatured proteins, in association with DnaK and GrpE. It is the nucleotide exchange factor for DnaK and may function as a thermosensor. Unfolded proteins bind initially to DnaJ; upon interaction with the DnaJ-bound protein, DnaK hydrolyzes its bound ATP, resulting in the formation of a stable complex. GrpE releases ADP from DnaK; ATP binding to DnaK triggers the release of the substrate protein, thus completing the reaction cycle. Several rounds of ATP-dependent interactions between DnaJ, DnaK and GrpE are required for fully efficient folding. The protein is Protein GrpE of Shewanella sp. (strain W3-18-1).